The sequence spans 449 residues: Phosphoribosylamine--glycine ligase (449 aa).

Residues 112-325 (RELMEKYDIP…IVTLHASIAE (214 aa)) form the ATP-grasp domain. An ATP-binding site is contributed by 139-202 (IDELGKPVAV…EEKCVGEEYT (64 aa)). Residues glutamine 283, glutamate 295, and asparagine 297 each contribute to the Mg(2+) site. Mn(2+) contacts are provided by glutamine 283, glutamate 295, and asparagine 297.

Belongs to the GARS family. Mg(2+) is required as a cofactor. Mn(2+) serves as cofactor.

It carries out the reaction 5-phospho-beta-D-ribosylamine + glycine + ATP = N(1)-(5-phospho-beta-D-ribosyl)glycinamide + ADP + phosphate + H(+). Its pathway is purine metabolism; IMP biosynthesis via de novo pathway; N(1)-(5-phospho-D-ribosyl)glycinamide from 5-phospho-alpha-D-ribose 1-diphosphate: step 2/2. This is Phosphoribosylamine--glycine ligase from Methanopyrus kandleri (strain AV19 / DSM 6324 / JCM 9639 / NBRC 100938).